A 249-amino-acid chain; its full sequence is 1-(5-phosphoribosyl)-5-[(5-phosphoribosylamino)methylideneamino] imidazole-4-carboxamide isomerase (249 aa).

D8 serves as the catalytic Proton acceptor. Residue D129 is the Proton donor of the active site.

Belongs to the HisA/HisF family.

The protein resides in the cytoplasm. It carries out the reaction 1-(5-phospho-beta-D-ribosyl)-5-[(5-phospho-beta-D-ribosylamino)methylideneamino]imidazole-4-carboxamide = 5-[(5-phospho-1-deoxy-D-ribulos-1-ylimino)methylamino]-1-(5-phospho-beta-D-ribosyl)imidazole-4-carboxamide. It functions in the pathway amino-acid biosynthesis; L-histidine biosynthesis; L-histidine from 5-phospho-alpha-D-ribose 1-diphosphate: step 4/9. The protein is 1-(5-phosphoribosyl)-5-[(5-phosphoribosylamino)methylideneamino] imidazole-4-carboxamide isomerase of Rhizobium rhizogenes (strain K84 / ATCC BAA-868) (Agrobacterium radiobacter).